Here is a 358-residue protein sequence, read N- to C-terminus: 4-hydroxy-2-oxovalerate aldolase 2 (358 aa).

In terms of domain architecture, Pyruvate carboxyltransferase spans valine 16–methionine 268. A substrate-binding site is contributed by arginine 24–aspartate 25. A Mn(2+)-binding site is contributed by aspartate 25. Residue histidine 28 is the Proton acceptor of the active site. Residues serine 178 and histidine 207 each contribute to the substrate site. 2 residues coordinate Mn(2+): histidine 207 and histidine 209. Substrate is bound at residue tyrosine 298.

The protein belongs to the 4-hydroxy-2-oxovalerate aldolase family.

The catalysed reaction is (S)-4-hydroxy-2-oxopentanoate = acetaldehyde + pyruvate. The polypeptide is 4-hydroxy-2-oxovalerate aldolase 2 (Methylibium petroleiphilum (strain ATCC BAA-1232 / LMG 22953 / PM1)).